Here is a 127-residue protein sequence, read N- to C-terminus: Major sperm protein 49 (127 aa).

Residue alanine 2 is modified to N-acetylalanine. Positions 9 to 126 constitute an MSP domain; that stretch reads DIQTQPGTKI…RRKNLPIEYN (118 aa).

In terms of tissue distribution, sperm.

The protein localises to the cell projection. It localises to the pseudopodium. It is found in the cytoplasm. The protein resides in the cytoskeleton. Functionally, central component in molecular interactions underlying sperm crawling. Forms an extensive filament system that extends from sperm villipoda, along the leading edge of the pseudopod. In Caenorhabditis elegans, this protein is Major sperm protein 49 (msp-49).